A 166-amino-acid polypeptide reads, in one-letter code: Phospholipase A2 inhibitor (166 aa).

Residues 1-19 (MRLILLSGLLLLGIFLANG) form the signal peptide. A C-type lectin domain is found at 46–161 (LRGAFLTVYK…CDDNLLVVCE (116 aa)). N61 and N122 each carry an N-linked (GlcNAc...) asparagine glycan. Intrachain disulfides connect C83–C160 and C138–C152.

The protein belongs to the alpha-type phospholipase A2 inhibitor family. Homotrimer; non-covalently linked. Expressed by the liver.

It is found in the secreted. Functionally, this phospholipase A2 inhibitor binds directly phospholipase A2 in the presence or absence of calcium. The protein is Phospholipase A2 inhibitor of Bothrops alternatus (Urutu).